A 209-amino-acid polypeptide reads, in one-letter code: Small ribosomal subunit protein uS3 (209 aa).

Residues 38-107 (IRKVIKSKYA…RFIVNVEEIK (70 aa)) form the KH type-2 domain.

It belongs to the universal ribosomal protein uS3 family. Part of the 30S ribosomal subunit. Forms a tight complex with proteins S10 and S14.

Binds the lower part of the 30S subunit head. Binds mRNA in the 70S ribosome, positioning it for translation. The chain is Small ribosomal subunit protein uS3 from Thermosipho melanesiensis (strain DSM 12029 / CIP 104789 / BI429).